A 417-amino-acid chain; its full sequence is Gamma-glutamyl phosphate reductase (417 aa).

This sequence belongs to the gamma-glutamyl phosphate reductase family.

The protein localises to the cytoplasm. The catalysed reaction is L-glutamate 5-semialdehyde + phosphate + NADP(+) = L-glutamyl 5-phosphate + NADPH + H(+). It participates in amino-acid biosynthesis; L-proline biosynthesis; L-glutamate 5-semialdehyde from L-glutamate: step 2/2. Functionally, catalyzes the NADPH-dependent reduction of L-glutamate 5-phosphate into L-glutamate 5-semialdehyde and phosphate. The product spontaneously undergoes cyclization to form 1-pyrroline-5-carboxylate. In Erwinia tasmaniensis (strain DSM 17950 / CFBP 7177 / CIP 109463 / NCPPB 4357 / Et1/99), this protein is Gamma-glutamyl phosphate reductase.